The primary structure comprises 37 residues: MEVNNLGFIAVLMFLAIPTAFLLIPYVKTASASSGSN.

A helical membrane pass occupies residues 7 to 27 (GFIAVLMFLAIPTAFLLIPYV).

The protein belongs to the PsbM family. PSII is composed of 1 copy each of membrane proteins PsbA, PsbB, PsbC, PsbD, PsbE, PsbF, PsbH, PsbI, PsbJ, PsbK, PsbL, PsbM, PsbT, PsbX, PsbY, PsbZ, Psb30/Ycf12, at least 3 peripheral proteins of the oxygen-evolving complex and a large number of cofactors. It forms dimeric complexes.

It localises to the plastid. The protein localises to the chloroplast thylakoid membrane. Functionally, one of the components of the core complex of photosystem II (PSII). PSII is a light-driven water:plastoquinone oxidoreductase that uses light energy to abstract electrons from H(2)O, generating O(2) and a proton gradient subsequently used for ATP formation. It consists of a core antenna complex that captures photons, and an electron transfer chain that converts photonic excitation into a charge separation. This subunit is found at the monomer-monomer interface. This Pinus koraiensis (Korean pine) protein is Photosystem II reaction center protein M.